Consider the following 202-residue polypeptide: ADP-ribosylation factor-like protein 15 (202 aa).

GTP is bound by residues 39-46 (GLTGSGKT), 82-86 (ELGGA), and 142-145 (NHQD).

It belongs to the small GTPase superfamily. Arf family.

This Bos taurus (Bovine) protein is ADP-ribosylation factor-like protein 15 (ARL15).